We begin with the raw amino-acid sequence, 918 residues long: Glutamate receptor ionotropic, kainate 1 (918 aa).

The signal sequence occupies residues 1 to 30 (MELGTLLAQPGLWTRDTSWALLYFLCYILP). The Extracellular portion of the chain corresponds to 31-576 (QTAPQVLRIG…VFSFLNPLSP (546 aa)). 7 N-linked (GlcNAc...) asparagine glycosylation sites follow: Asn68, Asn74, Asn276, Asn379, Asn428, Asn439, and Asn446. 3 residues coordinate L-glutamate: Pro531, Thr533, and Arg538. N-linked (GlcNAc...) asparagine glycosylation is present at Asn561. The chain crosses the membrane as a helical span at residues 577–597 (DIWMYVLLACLGVSCVLFVIA). Residues 598–653 (RFTPYEWYNPHPCNPDSDVVENNFTLLNSFWFGVGALMQQGSELMPKALSTRIVGG) are Cytoplasmic-facing. A helical transmembrane segment spans residues 654 to 674 (IWWFFTLIIISSYTANLAAFL). Over 675–834 (TVERMESPID…KEASALGVEN (160 aa)) the chain is Extracellular. Residues Ser704 and Thr705 each coordinate L-glutamate. Phosphoserine; by PKC is present on Ser725. Glu753 lines the L-glutamate pocket. Thr761 carries the phosphothreonine; by PKC modification. Cysteines 765 and 819 form a disulfide. An N-linked (GlcNAc...) asparagine glycan is attached at Asn766. A helical transmembrane segment spans residues 835–855 (IGGIFIVLAAGLVLSVFVAIG). The Cytoplasmic portion of the chain corresponds to 856–918 (EFIYKSRKNN…IRKQSSVHTV (63 aa)).

The protein belongs to the glutamate-gated ion channel (TC 1.A.10.1) family. GRIK1 subfamily. As to quaternary structure, homotetramer or heterotetramer of pore-forming glutamate receptor subunits. Tetramers may be formed by the dimerization of dimers. Can form functional heteromeric receptors with GRIK4 and GRIK5. Interacts with KLHL17.

Its subcellular location is the cell membrane. The protein localises to the postsynaptic cell membrane. It catalyses the reaction Ca(2+)(in) = Ca(2+)(out). Ionotropic glutamate receptor that functions as a cation-permeable ligand-gated ion channel, gated by L-glutamate and the glutamatergic agonist kainic acid. L-glutamate acts as an excitatory neurotransmitter at many synapses in the central nervous system. Binding of the excitatory neurotransmitter L-glutamate induces a conformation change, leading to the opening of the cation channel, and thereby converts the chemical signal to an electrical impulse. The receptor then desensitizes rapidly and enters a transient inactive state, characterized by the presence of bound agonist. The sequence is that of Glutamate receptor ionotropic, kainate 1 (GRIK1) from Macaca fascicularis (Crab-eating macaque).